A 334-amino-acid polypeptide reads, in one-letter code: Heat-inducible transcription repressor HrcA (334 aa).

This sequence belongs to the HrcA family.

Negative regulator of class I heat shock genes (grpE-dnaK-dnaJ and groELS operons). Prevents heat-shock induction of these operons. This is Heat-inducible transcription repressor HrcA from Paracidovorax citrulli (strain AAC00-1) (Acidovorax citrulli).